Consider the following 199-residue polypeptide: Pyridoxal 5'-phosphate synthase subunit PdxT (199 aa).

52-54 (GES) lines the L-glutamine pocket. The active-site Nucleophile is C84. Residues R115 and 143–144 (IR) each bind L-glutamine. Catalysis depends on charge relay system residues H179 and E181.

It belongs to the glutaminase PdxT/SNO family. In the presence of PdxS, forms a dodecamer of heterodimers. Only shows activity in the heterodimer.

The enzyme catalyses aldehydo-D-ribose 5-phosphate + D-glyceraldehyde 3-phosphate + L-glutamine = pyridoxal 5'-phosphate + L-glutamate + phosphate + 3 H2O + H(+). The catalysed reaction is L-glutamine + H2O = L-glutamate + NH4(+). It participates in cofactor biosynthesis; pyridoxal 5'-phosphate biosynthesis. Its function is as follows. Catalyzes the hydrolysis of glutamine to glutamate and ammonia as part of the biosynthesis of pyridoxal 5'-phosphate. The resulting ammonia molecule is channeled to the active site of PdxS. This is Pyridoxal 5'-phosphate synthase subunit PdxT from Methanosarcina mazei (strain ATCC BAA-159 / DSM 3647 / Goe1 / Go1 / JCM 11833 / OCM 88) (Methanosarcina frisia).